The primary structure comprises 1288 residues: (E3-independent) E2 ubiquitin-conjugating enzyme UBE2O (1288 aa).

Composition is skewed to low complexity over residues 1-26 (MADP…APAA) and 34-47 (ATDS…DSGP). Disordered stretches follow at residues 1–51 (MADP…EAGS) and 80–109 (EDSD…EGRA). Ser-45, Ser-82, Ser-84, and Ser-394 each carry phosphoserine. 2 disordered regions span residues 396 to 529 (TPDT…KNKV) and 711 to 743 (ESDY…NGLV). Over residues 401 to 418 (CPRDHSMEDPDKKGEARA) the composition is skewed to basic and acidic residues. Ser-436 carries the phosphoserine modification. Residues 440 to 450 (MQDEGSEELQE) are compositionally biased toward acidic residues. The span at 462-472 (EGGDDGLHSAE) shows a compositional bias: basic and acidic residues. Residues 473–485 (QDADDEAADDTDD) show a composition bias toward acidic residues. A phosphothreonine mark is found at Thr-483 and Thr-486. Positions 486 to 502 (TSSVTSSASSTTSSQSG) are enriched in low complexity. Ser-510 carries the phosphoserine modification. Positions 517-528 (NLKRKHKRKKNK) are enriched in basic residues. Over residues 717 to 726 (VEGSSSGASS) the composition is skewed to low complexity. The segment covering 727-737 (DEWEDDSDSWE) has biased composition (acidic residues). Residues 809 to 879 (RELKEAIKIL…IAEEEKMEAV (71 aa)) adopt a coiled-coil conformation. At Ser-833 the chain carries Phosphoserine. At Thr-835 the chain carries Phosphothreonine. Position 836 is a phosphoserine (Ser-836). The segment covering 872–890 (EEEKMEAVPDTERKEEKPE) has biased composition (basic and acidic residues). A disordered region spans residues 872 to 899 (EEEKMEAVPDTERKEEKPEVQSPVKAEW). Residue Ser-893 is modified to Phosphoserine. The region spanning 950-1110 (KFFSTVRKEM…ALIRVVQSMT (161 aa)) is the UBC core domain. Catalysis depends on Cys-1037, which acts as the Glycyl thioester intermediate. The interval 1158–1247 (GALKDSSSLE…RSFLPEKSGY (90 aa)) is disordered.

It belongs to the ubiquitin-conjugating enzyme family. Interacts with CPNE1 (via VWFA domain) and CPNE4 (via VWFA domain). Interacts with UBR2. In terms of processing, phosphorylated. Phosphorylation affects subcellular location. Ubiquitinated: autoubiquitinates, possibly affecting its subcellular location. Highly expressed in reticulocytes.

The protein localises to the cytoplasm. It is found in the nucleus. The catalysed reaction is S-ubiquitinyl-[E1 ubiquitin-activating enzyme]-L-cysteine + [acceptor protein]-L-lysine = [E1 ubiquitin-activating enzyme]-L-cysteine + N(6)-monoubiquitinyl-[acceptor protein]-L-lysine.. It participates in protein modification; protein ubiquitination. Its activity is regulated as follows. Inhibited by inorganic arsenite such as phenylarsenoxides. E2/E3 hybrid ubiquitin-protein ligase that displays both E2 and E3 ligase activities and mediates monoubiquitination of target proteins. Negatively regulates TRAF6-mediated NF-kappa-B activation independently of its E2 activity. Acts as a positive regulator of BMP7 signaling by mediating monoubiquitination of SMAD6, thereby regulating adipogenesis. Mediates monoubiquitination at different sites of the nuclear localization signal (NLS) of BAP1, leading to cytoplasmic retention of BAP1. Also able to monoubiquitinate the NLS of other chromatin-associated proteins, such as INO80 and CXXC1, affecting their subcellular location. Acts as a regulator of retrograde transport by assisting the TRIM27:MAGEL2 E3 ubiquitin ligase complex to mediate 'Lys-63'-linked ubiquitination of WASHC1, leading to promote endosomal F-actin assembly. This is (E3-independent) E2 ubiquitin-conjugating enzyme UBE2O (Ube2o) from Mus musculus (Mouse).